The following is a 67-amino-acid chain: Beta-defensin 123 (67 aa).

The first 20 residues, 1–20, serve as a signal peptide directing secretion; the sequence is MKLLLLTLTVLLLLSQLTPG. 3 cysteine pairs are disulfide-bonded: C25–C52, C32–C46, and C36–C53.

Belongs to the beta-defensin family. In terms of tissue distribution, abundant expression in the male reproductive tract only. Expressed abundantly in testis, while expression in epididymis decreased gradually from caput to cauda.

It localises to the secreted. Has antibacterial activity. This Macaca mulatta (Rhesus macaque) protein is Beta-defensin 123 (DEFB123).